A 467-amino-acid polypeptide reads, in one-letter code: Uronate isomerase (467 aa).

The protein belongs to the metallo-dependent hydrolases superfamily. Uronate isomerase family.

The enzyme catalyses D-glucuronate = D-fructuronate. It catalyses the reaction aldehydo-D-galacturonate = keto-D-tagaturonate. It functions in the pathway carbohydrate metabolism; pentose and glucuronate interconversion. The chain is Uronate isomerase from Clostridium acetobutylicum (strain ATCC 824 / DSM 792 / JCM 1419 / IAM 19013 / LMG 5710 / NBRC 13948 / NRRL B-527 / VKM B-1787 / 2291 / W).